We begin with the raw amino-acid sequence, 80 residues long: Biotin synthase auxiliary protein (80 aa).

It belongs to the BsaP family. It depends on iron-sulfur cluster as a cofactor.

In terms of biological role, required for the activity of the biotin synthase BioB. The chain is Biotin synthase auxiliary protein from Mycobacterium leprae (strain TN).